A 1028-amino-acid chain; its full sequence is MTDQENNNNISSNPFAALFGSLADAKQFAAIQKEQLKQQSDELPASPDDSDNSVSESLDEFDYSVSEISRSFRTHQEMCEQLNINHMIQRIFLITLDNSDPSLKSGNGIPSRCVYLEEMAVELEDQDWLDMSNVEQAIFARLLLQDPGNHLISMTSSTTLNLSADRDAGERHIFCYLYSCFQRAKEEITKVPENLLPFAVQCRNLTVSNTRTVLLTPEIYVDQNIHEQLVDLMLEAIQGAHFEDVTEFLEEVIEALLLDEEVRTFPEVMIPVFDILLSRIKDLELCQILLYAYLDILLYFTRQKDMAKVFLEYIQPKDPSNGQMYQKTLLGVILNISCLLKTPGVVENHGFFLNPSRSSPQEIKVQEANIHQFMAQFHEKIYQMLKNLLQLSPETKHCILFWLGNCLHANAGRTKIWANQMPEIFFQMYASDAFFLNLGAALLKLCQPFCKPRSSRLLTFNPTYCVLKDLNDEERKIKSVHMRGLDKETCLIPAVQEPTFPQSYNLVTENLALTEYTLYLGFHRLHDQMVKINQNLHRLQVAWRDAQQSSSPAADNLREQFERLMTIYLSTKTAMTEPQMLQNCLNLQVSMAVLLVQLAIGNEGSQPIELSFPLPDGYSSLAYVPEFFADNLGDFLIFLRRFAEDILETSADSLEHVLHFITIFTGSIERMKNPHLRAKLAEVLEAVMPHLDQTPSPLVSSVFHRKRVFCNFPYAPQLAEALIKVFVDIEFTGDPHQFEQKFNYRRPMYPILRYMWGTDCYRESIKYLSKIKIQQIEKDRGEWESLTPEARREKEAGLQMFGQLARFHNIMSNETIGTLSFLTSEIKSLFVHPFLAERIISMLNYFLQHLVGPKMGALKVKDFSEFDFKPQQLVSDICTIYLNLGDEENFCATVPKDGRSYSPTLFAQTVRVLKKINKPGNMIVAFSNLAERIKSLADLQQQEEETYADACDEFLDPIMSTLMSDPVVLPSSRVTVDRSTIARHLLSDQTDPFNRSPLTMDQIRPNTELKEKIQRWLAERKQQKEQPE.

The disordered stretch occupies residues 33–57 (KEQLKQQSDELPASPDDSDNSVSES). Lys386 carries the N6-acetyllysine modification. The 75-residue stretch at 949–1023 (DACDEFLDPI…QRWLAERKQQ (75 aa)) folds into the U-box domain.

The protein belongs to the ubiquitin conjugation factor E4 family. As to expression, expressed in liver, heart, brain, kidney and testis.

It localises to the cytoplasm. The enzyme catalyses S-ubiquitinyl-[E2 ubiquitin-conjugating enzyme]-L-cysteine + [acceptor protein]-L-lysine = [E2 ubiquitin-conjugating enzyme]-L-cysteine + N(6)-ubiquitinyl-[acceptor protein]-L-lysine.. It functions in the pathway protein modification; protein ubiquitination. In terms of biological role, ubiquitin-protein ligase that probably functions as an E3 ligase in conjunction with specific E1 and E2 ligases. May also function as an E4 ligase mediating the assembly of polyubiquitin chains on substrates ubiquitinated by another E3 ubiquitin ligase. Mediates 'Lys-48'-linked polyubiquitination of substrates. The sequence is that of Ubiquitin conjugation factor E4 A from Mus musculus (Mouse).